The chain runs to 636 residues: Serine/threonine-protein kinase hal4 (636 aa).

The span at 1–11 (MGEKDKLHEIS) shows a compositional bias: basic and acidic residues. 2 disordered regions span residues 1–167 (MGEK…AGVV) and 181–261 (AASP…PSSA). Over residues 33-45 (EPPPPSSQQPPST) the composition is skewed to pro residues. 2 stretches are compositionally biased toward polar residues: residues 56 to 92 (ALKQ…QQPL) and 113 to 124 (NPSRHVSSTSNK). The segment covering 140–155 (PSGSVPPSASVSRANS) has biased composition (low complexity). Residues 182–226 (ASPNPSTPSNGPAPVSTTATPSRNPVTRLQRIFSQNSVSRQNSRT) show a composition bias toward polar residues. Ser218 is modified (phosphoserine). A compositionally biased stretch (low complexity) spans 234 to 261 (NTEETNSTGGSETGGAANSSSTSNPSSA). Residues Thr238 and Thr241 each carry the phosphothreonine modification. Ser299 is modified (phosphoserine). In terms of domain architecture, Protein kinase spans 351 to 623 (GRCQEVIGRG…AKQIMKSEWV (273 aa)). ATP-binding positions include 357–365 (IGRGAFGVV) and Lys385. Asp481 functions as the Proton acceptor in the catalytic mechanism.

Belongs to the protein kinase superfamily. Ser/Thr protein kinase family. In terms of assembly, interacts with sty1.

The protein localises to the cytoplasm. It catalyses the reaction L-seryl-[protein] + ATP = O-phospho-L-seryl-[protein] + ADP + H(+). The catalysed reaction is L-threonyl-[protein] + ATP = O-phospho-L-threonyl-[protein] + ADP + H(+). Functionally, promotes K(+) uptake, by the potassium transporter trk1-trk2, which leads to the subsequent cellular resistance to toxic cations such as Na(+), Li(+) and Ca(2+). This Schizosaccharomyces pombe (strain 972 / ATCC 24843) (Fission yeast) protein is Serine/threonine-protein kinase hal4 (hal4).